Here is a 594-residue protein sequence, read N- to C-terminus: MADLLSSLKNLPNSSGVYQYFDKNRQLLYIGKAKNLKKRIKSYFSIRNNEITPNHRASLRVQMMVKQIAFLETILVENEQDALILENSLIKQLKPKYNILLRDDKTYPYIYMDFSTDFPIPLITRKILKQPGVKYFGPFTSGAKDILDSLYELLPLVQKKNCIKDKKACMFYQIERCKAPCEDKITKEEYLKIAKKCLEMIENKDRLIKELELKMERLSSKLRFEEALIYRDRIAKIQKIAPFTCMDLAKLYDLDIFAFYGTSNKAVLVKMFMRGGKIISSAFEKIHSLNGFDTDEAMKQAIINHYQSHLPLIPEQILLNACSNETLKELQEFISHQYSKKIALSIPKKGDKLALIEIAMKNAQEIFSQEKTSNEDLILEEARSLFKLECMPYRVEIFDTSHHANSQCVGGMVVYENNAFQKNSYRLYHLKGSDEYAQMSELLTRRALDFAKEPPPNLWVIDGGRAQLNIALEILKSSGSFVEVIAISKEKRDSKAYRSKGGAKDIIHTPSDTFKLLPSDKRLQWVQKLRDESHRYAINFHRSTKLKNLKQIALLKEKGIGEASVKKLLDYFGSFEAIEKASEQEKNAVLKKRN.

A GIY-YIG domain is found at N13–I99. A UVR domain is found at D205 to I240.

The protein belongs to the UvrC family. In terms of assembly, interacts with UvrB in an incision complex.

It is found in the cytoplasm. The UvrABC repair system catalyzes the recognition and processing of DNA lesions. UvrC both incises the 5' and 3' sides of the lesion. The N-terminal half is responsible for the 3' incision and the C-terminal half is responsible for the 5' incision. This chain is UvrABC system protein C, found in Helicobacter pylori (strain P12).